Here is a 1809-residue protein sequence, read N- to C-terminus: Proprotein convertase subtilisin/kexin type 5 (1809 aa).

The N-terminal stretch at 1 to 34 is a signal peptide; sequence MDWGWGSRCCRPGRRDLLCVLALLAGCLLPVCRT. The propeptide occupies 35–116; it reads RVYTNHWAVK…QQVVKKRTKR (82 aa). The Extracellular portion of the chain corresponds to 117 to 1700; the sequence is DYDLSRAQST…DTVFHEHTKT (1584 aa). The region spanning 136–455 is the Peptidase S8 domain; that stretch reads MWYMHCSDNT…FGLMDAEAMV (320 aa). Catalysis depends on charge relay system residues D173 and H214. N-linked (GlcNAc...) asparagine glycans are attached at residues N227 and N383. S388 functions as the Charge relay system in the catalytic mechanism. In terms of domain architecture, P/Homo B spans 463–603; it reads TVPQQHVCVE…SLVLYGTSVQ (141 aa). Positions 521-523 match the Cell attachment site motif; the sequence is RGD. FU repeat units follow at residues 632 to 682, 685 to 732, 736 to 779, 781 to 826, 834 to 881, 884 to 929, 931 to 964, 965 to 1010, 1012 to 1054, 1058 to 1099, 1137 to 1179, 1183 to 1230, 1232 to 1276, 1278 to 1321, 1323 to 1369, 1373 to 1418, 1422 to 1467, 1471 to 1516, 1520 to 1567, 1571 to 1616, and 1622 to 1669; these read EDYA…GHFH, KKRC…GSYQ, KNIC…GQFF, GHDC…SYYL, YKSC…GEYI, QGHC…WKFE, KKQCHPCHHTCQGCQGSGPSNCTSCKAGEFQDSE, YGEC…KTFG, KWEC…GFYG, LGEC…PTWP, TRQY…GTWL, SSSC…GFYA, DGVC…KHVA, EGVC…NFYP, MRQC…GTYK, NDEC…IEYW, SHRC…GYHT, SHQC…GYYG, SGRC…HYYA, AQTC…GEYR, and NFNC…SHPH. The CRM (Cys-rich motif) stretch occupies residues 638–1685; sequence CDPECSEVGC…DCQSSTDECI (1048 aa). A glycan (N-linked (GlcNAc...) asparagine) is linked at N667. N754, N804, and N854 each carry an N-linked (GlcNAc...) asparagine glycan. 2 N-linked (GlcNAc...) asparagine glycosylation sites follow: N1642 and N1664. A helical transmembrane segment spans residues 1701 to 1721; the sequence is ALLVTSGAMLLLLLGAAVVVW. Residues 1722 to 1809 lie on the Cytoplasmic side of the membrane; that stretch reads RKSRSQPVAK…EYDDESYSYQ (88 aa). AC stretches follow at residues 1757 to 1776 and 1788 to 1809; these read VIEYRDRDYDEDDEDDIVYM and YGLLDEAEDDELEYDDESYSYQ.

It belongs to the peptidase S8 family. In terms of tissue distribution, expressed in the intestine, brain, adrenal gland, anterior pituitary, thyroid, ovaries, testis and lung. Highest levels are found in the gut, duodenum, jejunum and ileum. Expression is higher in female than in male reproductive organs.

The protein resides in the secreted. It localises to the endomembrane system. Its function is as follows. Serine endoprotease that processes various proproteins by cleavage at paired basic amino acids, recognizing the RXXX[KR]R consensus motif. Likely functions in the constitutive and regulated secretory pathways. Plays an essential role in pregnancy establishment by proteolytic activation of a number of important factors such as BMP2, CALD1 and alpha-integrins. May be responsible for the maturation of gastrointestinal peptides. May be involved in the cellular proliferation of adrenal cortex via the activation of growth factors. The sequence is that of Proprotein convertase subtilisin/kexin type 5 (Pcsk5) from Rattus norvegicus (Rat).